A 441-amino-acid polypeptide reads, in one-letter code: MATANIAIKQNSSTNIAFIERMPSPSLHRILYNLFSKFSYSLSNSCHFNLKCLNFVMNRMFHMSMEDLSQCTILIVDDSPDNIAFMSQGLAQYYRIKAARSGKVALEILAQYPIDLVLLDIVMPEMSGYEVINQIKHNPHTEHIPVIFLTGKSNPEDEQLGFELGAVDYVFKPVSIPLLKSRVHTHLQNKRSKDILLNQNDYLETEVLRRSGELDRMQDAVVFALASLAETRDPETGNHLLRTQHYVKVLAQRLATTDKYRDVLSPTVIDTYFKAAPLHDIGKVGIPDNILLKPGKLTPDEFTTMRNHALLGKLALEKAEKLSGACTALINVAKEIAMGHHEKWDGSGYPLGLKGDDIPLSARLMALADVYDALICRRVYKEPMSHEEAKAIILQGRGSHFDPMVIDAFLIEEQNFIDIAQKFADEESAMVPIQLGQQASG.

One can recognise a Response regulatory domain in the interval 72–187 (TILIVDDSPD…LLKSRVHTHL (116 aa)). A 4-aspartylphosphate modification is found at aspartate 120. An HD-GYP domain is found at 214–425 (LDRMQDAVVF…FIDIAQKFAD (212 aa)).

The catalysed reaction is 3',3'-c-di-GMP + 2 H2O = 2 GMP + 2 H(+). In terms of biological role, probable phosphodiesterase (PDE) that catalyzes the hydrolysis of cyclic diguanylate (c-di-GMP). Increases motility and decreases biofilm formation in vivo. The chain is Probable cyclic di-GMP phosphodiesterase VC_1348 from Vibrio cholerae serotype O1 (strain ATCC 39315 / El Tor Inaba N16961).